The chain runs to 115 residues: UPF0102 protein Swol_1475 (115 aa).

It belongs to the UPF0102 family.

The chain is UPF0102 protein Swol_1475 from Syntrophomonas wolfei subsp. wolfei (strain DSM 2245B / Goettingen).